We begin with the raw amino-acid sequence, 239 residues long: Probable transcriptional regulatory protein LMOf2365_0385 (239 aa).

The protein belongs to the TACO1 family. YeeN subfamily.

Its subcellular location is the cytoplasm. This Listeria monocytogenes serotype 4b (strain F2365) protein is Probable transcriptional regulatory protein LMOf2365_0385.